The following is a 226-amino-acid chain: ATP synthase F(0) complex subunit a (226 aa).

Helical transmembrane passes span 12 to 32, 68 to 88, 97 to 117, 138 to 158, 164 to 184, and 200 to 222; these read PTMM…ILFP, WALM…LGLL, QLSM…ITGF, IPML…ALAV, ITAG…LMNI, and TILE…SLYL.

Belongs to the ATPase A chain family. In terms of assembly, component of the ATP synthase complex composed at least of ATP5F1A/subunit alpha, ATP5F1B/subunit beta, ATP5MC1/subunit c (homooctomer), MT-ATP6/subunit a, MT-ATP8/subunit 8, ATP5ME/subunit e, ATP5MF/subunit f, ATP5MG/subunit g, ATP5MK/subunit k, ATP5MJ/subunit j, ATP5F1C/subunit gamma, ATP5F1D/subunit delta, ATP5F1E/subunit epsilon, ATP5PF/subunit F6, ATP5PB/subunit b, ATP5PD/subunit d, ATP5PO/subunit OSCP. ATP synthase complex consists of a soluble F(1) head domain (subunits alpha(3) and beta(3)) - the catalytic core - and a membrane F(0) domain - the membrane proton channel (subunits c, a, 8, e, f, g, k and j). These two domains are linked by a central stalk (subunits gamma, delta, and epsilon) rotating inside the F1 region and a stationary peripheral stalk (subunits F6, b, d, and OSCP). Interacts with DNAJC30; interaction is direct.

Its subcellular location is the mitochondrion inner membrane. The catalysed reaction is H(+)(in) = H(+)(out). In terms of biological role, subunit a, of the mitochondrial membrane ATP synthase complex (F(1)F(0) ATP synthase or Complex V) that produces ATP from ADP in the presence of a proton gradient across the membrane which is generated by electron transport complexes of the respiratory chain. ATP synthase complex consist of a soluble F(1) head domain - the catalytic core - and a membrane F(1) domain - the membrane proton channel. These two domains are linked by a central stalk rotating inside the F(1) region and a stationary peripheral stalk. During catalysis, ATP synthesis in the catalytic domain of F(1) is coupled via a rotary mechanism of the central stalk subunits to proton translocation. With the subunit c (ATP5MC1), forms the proton-conducting channel in the F(0) domain, that contains two crucial half-channels (inlet and outlet) that facilitate proton movement from the mitochondrial intermembrane space (IMS) into the matrix. Protons are taken up via the inlet half-channel and released through the outlet half-channel, following a Grotthuss mechanism. The sequence is that of ATP synthase F(0) complex subunit a from Felis catus (Cat).